Reading from the N-terminus, the 72-residue chain is Large ribosomal subunit protein uL29 (72 aa).

Belongs to the universal ribosomal protein uL29 family.

This chain is Large ribosomal subunit protein uL29, found in Prochlorococcus marinus (strain AS9601).